The primary structure comprises 201 residues: Peptidyl-tRNA hydrolase (201 aa).

Y14 lines the tRNA pocket. Residue H19 is the Proton acceptor of the active site. Y64, N66, and N112 together coordinate tRNA.

This sequence belongs to the PTH family. Monomer.

The protein localises to the cytoplasm. The enzyme catalyses an N-acyl-L-alpha-aminoacyl-tRNA + H2O = an N-acyl-L-amino acid + a tRNA + H(+). In terms of biological role, hydrolyzes ribosome-free peptidyl-tRNAs (with 1 or more amino acids incorporated), which drop off the ribosome during protein synthesis, or as a result of ribosome stalling. Catalyzes the release of premature peptidyl moieties from peptidyl-tRNA molecules trapped in stalled 50S ribosomal subunits, and thus maintains levels of free tRNAs and 50S ribosomes. This Afipia carboxidovorans (strain ATCC 49405 / DSM 1227 / KCTC 32145 / OM5) (Oligotropha carboxidovorans) protein is Peptidyl-tRNA hydrolase.